The primary structure comprises 363 residues: Peroxisomal (S)-2-hydroxyacid oxidase GLO3 (363 aa).

The 357-residue stretch at 1–357 (MDQIVNVDEF…TRNHVRTENE (357 aa)) folds into the FMN hydroxy acid dehydrogenase domain. FMN contacts are provided by residues 78-80 (PTG), Ser107, 128-130 (QIY), and Thr156. Residue Tyr130 coordinates a 2-oxocarboxylate. Residue Arg165 participates in a 2-oxocarboxylate binding. FMN contacts are provided by Lys228 and Ser250. The active-site Proton acceptor is His252. Arg255 lines the a 2-oxocarboxylate pocket. FMN contacts are provided by residues 283–287 (DGGVR) and 306–307 (GR). Residues 361-363 (SML) carry the Microbody targeting signal motif.

It belongs to the FMN-dependent alpha-hydroxy acid dehydrogenase family. In terms of assembly, homotetramer. FMN serves as cofactor.

The protein localises to the peroxisome. The enzyme catalyses a (2S)-2-hydroxycarboxylate + O2 = a 2-oxocarboxylate + H2O2. The catalysed reaction is 2-hydroxy-4-methylpentanoate + O2 = 4-methyl-2-oxopentanoate + H2O2. It catalyses the reaction 2-hydroxyhexanoate + O2 = 2-oxohexanoate + H2O2. It carries out the reaction 2-hydroxyoctanoate + O2 = 2-oxooctanoate + H2O2. Its function is as follows. Oxidase that catalyzes the oxidation of a broad range of 2-hydroxyacids to the corresponding 2-oxoacids, with a reduction of O2 to H2O2. Displays the highest activity with leucic acid (2-hydroxy-4-methylpentanoate) and has intermediate activity with 2-hydroxyhexanoate and 2-hydroxyoctanote. Shows lower activity with 2-hydroxydodecanoate, valic acid, and isoleucic acid and extremely low activity with glycolate and L-lactate. Cannot use 2-hydroxyhexadecanoate or D-lactate as substrates. May be involved in the conversion or degradation of 2-hydroxyacids produced during the metabolism of fatty acids or amino acids. The sequence is that of Peroxisomal (S)-2-hydroxyacid oxidase GLO3 (GLO3) from Arabidopsis thaliana (Mouse-ear cress).